We begin with the raw amino-acid sequence, 403 residues long: Serine/threonine transporter SstT (403 aa).

The next 8 helical transmembrane spans lie at 11 to 31 (GNLVIRIAIGLVLGVLLAFIS), 51 to 71 (AIAPILVFVLVLSAIANKEVG), 81 to 101 (VMYVLGTFLAALTAVVFSFIF), 138 to 158 (ALANANFIGILAWAIGLGIPL), 175 to 195 (AVSYVVKMVISVAPIGVFGLV), 213 to 233 (LLGVLLGAMMTVIFVLDPILV), 285 to 305 (VAIPLGATINMAGAAITVTVL), and 319 to 339 (FMTALLLSIVASICACGASGV).

Belongs to the dicarboxylate/amino acid:cation symporter (DAACS) (TC 2.A.23) family.

The protein resides in the cell inner membrane. It carries out the reaction L-serine(in) + Na(+)(in) = L-serine(out) + Na(+)(out). It catalyses the reaction L-threonine(in) + Na(+)(in) = L-threonine(out) + Na(+)(out). Its function is as follows. Involved in the import of serine and threonine into the cell, with the concomitant import of sodium (symport system). The chain is Serine/threonine transporter SstT from Haemophilus ducreyi (strain 35000HP / ATCC 700724).